The sequence spans 1468 residues: DNA polymerase III PolC-type (1468 aa).

Residues 197-217 are disordered; it reads QKSLEDSAPPSEEVTPTQNYD. The Exonuclease domain maps to 430-586; the sequence is YVVFDVETTG…YDAEATGRLL (157 aa).

The protein belongs to the DNA polymerase type-C family. PolC subfamily.

The protein resides in the cytoplasm. The enzyme catalyses DNA(n) + a 2'-deoxyribonucleoside 5'-triphosphate = DNA(n+1) + diphosphate. Functionally, required for replicative DNA synthesis. This DNA polymerase also exhibits 3' to 5' exonuclease activity. This chain is DNA polymerase III PolC-type, found in Streptococcus agalactiae serotype III (strain NEM316).